We begin with the raw amino-acid sequence, 1004 residues long: Protein phosphatase 1 regulatory subunit 12A (1004 aa).

The segment at 35-38 is important for interaction with PPP1CB; that stretch reads KVKF. ANK repeat units lie at residues 39–68, 72–101, 105–134, 138–164, 198–227, and 231–260; these read DDGA…DINY, DGLT…NINQ, EGWI…HVGA, EGDT…RQGV, SGGT…DVNI, and DGWT…DMEA. Residues 291–300 are compositionally biased toward basic and acidic residues; the sequence is HSEKREKKSP. The interval 291–920 is disordered; sequence HSEKREKKSP…SYLEDRKPYC (630 aa). Over residues 302-316 the composition is skewed to polar residues; it reads IESTANLDNNQTQKT. 2 stretches are compositionally biased toward basic and acidic residues: residues 318-329 and 336-353; these read KNKETLIMEQEK and SLEH…KDES. Residues 357–369 show a composition bias toward acidic residues; the sequence is SEEEEDDDSESEA. Over residues 378 to 392 the composition is skewed to polar residues; sequence ANANTTSTQSASMTA. Positions 417–427 are enriched in basic and acidic residues; that stretch reads SPKEEERKDES. Positions 464–475 are enriched in low complexity; the sequence is RSASSPRLSSSL. Residues 476-486 are compositionally biased toward basic and acidic residues; the sequence is DNKEKEKDGKG. The segment covering 514 to 525 has biased composition (low complexity); sequence SSASSIRSGSSY. Positions 528 to 538 are enriched in basic and acidic residues; it reads RKWEEDVKKNS. Residues 539-554 are compositionally biased toward polar residues; that stretch reads LNEGPTSLNTSYQRSG. Composition is skewed to low complexity over residues 564 to 578 and 587 to 602; these read VSSN…VTSS and ASAN…STSA. Residues 613–624 are compositionally biased toward basic and acidic residues; sequence WAEDSTEKEKDS. Residues 625 to 659 show a composition bias toward low complexity; that stretch reads VPTAVTVPVAPSVVNAAATTTAMTTATSGTVSSTS. Residues 672-681 show a composition bias toward basic and acidic residues; the sequence is VRDEESESQR. The span at 682 to 692 shows a compositional bias: basic residues; it reads KARSRQARQSR. Thr-695 carries the post-translational modification Phosphothreonine; by ROCK2. Basic and acidic residues predominate over residues 717 to 765; that stretch reads RTREQENEEKEKEEKEKQDKEKQEEKKESETKDDDYRQRYSRTVEEPYH. Residues 770 to 793 are compositionally biased toward low complexity; the sequence is TSTSTSTSSTSSLSTSTSSLSSSS. The segment covering 794-808 has biased composition (polar residues); the sequence is QLNRPNSLIGITSAY. Basic and acidic residues predominate over residues 812–837; sequence GTKESEREGGKKEEEKEEDKSQPKSI. Basic residues predominate over residues 838-849; the sequence is RERRRPREKRRS. Position 850 is a phosphothreonine; by ROCK2 (Thr-850). The span at 864 to 880 shows a compositional bias: basic and acidic residues; the sequence is QEHQSDSEEGTNKKETQ. Residues 881–896 are compositionally biased toward polar residues; it reads SDSLSRYDTGSLSVSS.

In terms of assembly, PP1 comprises a catalytic subunit, PPP1CA, PPP1CB or PPP1CC, and one or several targeting or regulatory subunits. PPP1R12A mediates binding to myosin. Post-translationally, phosphorylated by CIT (Rho-associated kinase) and by ROCK2 on serine and threonine residues. Phosphorylation at Thr-695 leads to inhibition of myosin phosphatase activity. Phosphorylation at Thr-850 abolishes myosin binding. May be phosphorylated at Thr-695 by DMPK; may inhibit the myosin phosphatase activity. Detected in brain, lung, aorta, heart, gizzard, stomach, oviduct, spleen, kidney and small intestine.

The protein resides in the cytoplasm. The protein localises to the cytoskeleton. Its subcellular location is the stress fiber. Regulates myosin phosphatase activity. This chain is Protein phosphatase 1 regulatory subunit 12A (PPP1R12A), found in Gallus gallus (Chicken).